Consider the following 64-residue polypeptide: Alpha-conotoxin SI (64 aa).

An N-terminal signal peptide occupies residues 1-21 (MGMRMMFTVFLLVVLATTVVS). Residues 22-49 (FPSDRASDGRDDEAKDERSDMHESDRKE) constitute a propeptide that is removed on maturation. A disordered region spans residues 23–47 (PSDRASDGRDDEAKDERSDMHESDR). The segment covering 26-47 (RASDGRDDEAKDERSDMHESDR) has biased composition (basic and acidic residues). Intrachain disulfides connect Cys-51–Cys-56 and Cys-52–Cys-62. Cysteine amide is present on Cys-62.

It belongs to the conotoxin A superfamily. Expressed by the venom duct.

It localises to the secreted. Its function is as follows. Alpha-conotoxins act on postsynaptic membranes, they bind to the nicotinic acetylcholine receptors (nAChR) and thus inhibit them. Is active on muscle nAChR (IC(50)=113 nM on adult subtype (alpha-1-beta-1-gamma-delta/CHRNA1-CHRNB1-CHRNG-CHRND) and IC(50)=142 nM on fetal subtype (alpha-1-beta-1-delta-epsilon/CHRNA1-CHRNB1-CHRND-CHRNE)). On mice muscle receptors, its higher affinity site is the alpha/delta nAChR subunit interface. On Torpedo receptors, it does not distinguish between alpha/delta and alpha/gamma acetylcholine-binding sites. In vivo, causes paralysis followed by death when injected into goldfish. In contrast, has no effect on mice, when similar doses are intraperitoneally or intracerebrally injected. This Conus striatus (Striated cone) protein is Alpha-conotoxin SI.